A 479-amino-acid chain; its full sequence is Poly(A) polymerase catalytic subunit (479 aa).

Residues D202 and D204 contribute to the active site. Positions 202, 204, and 253 each coordinate Ca(2+).

This sequence belongs to the poxviridae poly(A) polymerase catalytic subunit family. Heterodimer of a large (catalytic) subunit and a small (regulatory) subunit.

The catalysed reaction is RNA(n) + ATP = RNA(n)-3'-adenine ribonucleotide + diphosphate. Functionally, polymerase that creates the 3'-poly(A) tail of mRNA's. The sequence is that of Poly(A) polymerase catalytic subunit (OPG063) from Bos taurus (Bovine).